The following is a 249-amino-acid chain: Triosephosphate isomerase (249 aa).

Residue 9-11 coordinates substrate; that stretch reads NWK. H94 functions as the Electrophile in the catalytic mechanism. The Proton acceptor role is filled by E166. Substrate-binding positions include G172, S211, and 232–233; that span reads GG.

This sequence belongs to the triosephosphate isomerase family. Homodimer.

The protein localises to the cytoplasm. The catalysed reaction is D-glyceraldehyde 3-phosphate = dihydroxyacetone phosphate. It participates in carbohydrate biosynthesis; gluconeogenesis. The protein operates within carbohydrate degradation; glycolysis; D-glyceraldehyde 3-phosphate from glycerone phosphate: step 1/1. In terms of biological role, involved in the gluconeogenesis. Catalyzes stereospecifically the conversion of dihydroxyacetone phosphate (DHAP) to D-glyceraldehyde-3-phosphate (G3P). In Chromohalobacter salexigens (strain ATCC BAA-138 / DSM 3043 / CIP 106854 / NCIMB 13768 / 1H11), this protein is Triosephosphate isomerase.